The chain runs to 69 residues: uncharacterized protein (69 aa).

This is an uncharacterized protein from Saccharolobus islandicus (Sulfolobus islandicus).